A 236-amino-acid polypeptide reads, in one-letter code: 2-C-methyl-D-erythritol 4-phosphate cytidylyltransferase (236 aa).

The protein belongs to the IspD/TarI cytidylyltransferase family. IspD subfamily.

The enzyme catalyses 2-C-methyl-D-erythritol 4-phosphate + CTP + H(+) = 4-CDP-2-C-methyl-D-erythritol + diphosphate. Its pathway is isoprenoid biosynthesis; isopentenyl diphosphate biosynthesis via DXP pathway; isopentenyl diphosphate from 1-deoxy-D-xylulose 5-phosphate: step 2/6. Its function is as follows. Catalyzes the formation of 4-diphosphocytidyl-2-C-methyl-D-erythritol from CTP and 2-C-methyl-D-erythritol 4-phosphate (MEP). The protein is 2-C-methyl-D-erythritol 4-phosphate cytidylyltransferase of Pseudomonas syringae pv. tomato (strain ATCC BAA-871 / DC3000).